Here is a 1063-residue protein sequence, read N- to C-terminus: NAD-specific glutamate dehydrogenase (1063 aa).

This sequence belongs to the Glu/Leu/Phe/Val dehydrogenases family. Highly divergent. As to quaternary structure, homotetramer.

It carries out the reaction L-glutamate + NAD(+) + H2O = 2-oxoglutarate + NH4(+) + NADH + H(+). With respect to regulation, allosterically activated by NADP(+). This is NAD-specific glutamate dehydrogenase from Achlya klebsiana.